The following is a 350-amino-acid chain: Cobalt-precorrin-5B C(1)-methyltransferase (350 aa).

Belongs to the CbiD family.

The enzyme catalyses Co-precorrin-5B + S-adenosyl-L-methionine = Co-precorrin-6A + S-adenosyl-L-homocysteine. It participates in cofactor biosynthesis; adenosylcobalamin biosynthesis; cob(II)yrinate a,c-diamide from sirohydrochlorin (anaerobic route): step 6/10. Its function is as follows. Catalyzes the methylation of C-1 in cobalt-precorrin-5B to form cobalt-precorrin-6A. The chain is Cobalt-precorrin-5B C(1)-methyltransferase from Syntrophotalea carbinolica (strain DSM 2380 / NBRC 103641 / GraBd1) (Pelobacter carbinolicus).